A 126-amino-acid polypeptide reads, in one-letter code: Adenosine 5'-monophosphoramidase HINT1 (126 aa).

An N-acetylalanine modification is found at Ala2. One can recognise an HIT domain in the interval 18-126 (IFGKIIRKEI…GGRQMNWPPG (109 aa)). Lys21 and Lys30 each carry N6-acetyllysine. 43–44 (DI) is an AMP binding site. Phosphoserine is present on residues Ser45 and Ser72. AMP is bound by residues Asn99, 105–107 (GQS), and 112–114 (HLH). The short motif at 110-114 (HVHLH) is the Histidine triad motif element. The active-site Tele-AMP-histidine intermediate is the His112.

The protein belongs to the HINT family. Homodimer. Interacts with CDK7. Interacts with RUVBL1 and RUVBL2 and is associated with the LEF1/TCF1-CTNNB1 complex and with a KAT5 histone acetyltransferase complex. Identified in a complex with MITF and CTNNB1. Interacts with CDC34 and RBX1, and is part of a SCF (SKP2-CUL1-F-box protein) E3 ubiquitin-protein ligase complex. Interacts with SUMO1, SUMO2 and RGS17. Interacts with the Ten-1 ICD form of TENM1. Interacts with CALM1; interaction increases in the presence of calcium ions. Widely expressed.

It localises to the cytoplasm. It is found in the nucleus. It carries out the reaction adenosine 5'-phosphoramidate + H2O = AMP + NH4(+). In terms of biological role, exhibits adenosine 5'-monophosphoramidase activity, hydrolyzing purine nucleotide phosphoramidates with a single phosphate group such as adenosine 5'monophosphoramidate (AMP-NH2) to yield AMP and NH2. Hydrolyzes adenosine 5'monophosphomorpholidate (AMP-morpholidate) and guanosine 5'monophosphomorpholidate (GMP-morpholidate). Hydrolyzes lysyl-AMP (AMP-N-epsilon-(N-alpha-acetyl lysine methyl ester)) generated by lysine tRNA ligase, as well as Met-AMP, His-AMP and Asp-AMP, lysyl-GMP (GMP-N-epsilon-(N-alpha-acetyl lysine methyl ester)) and AMP-N-alanine methyl ester. Can also convert adenosine 5'-O-phosphorothioate and guanosine 5'-O-phosphorothioate to the corresponding nucleoside 5'-O-phosphates with concomitant release of hydrogen sulfide. In addition, functions as a scaffolding protein that modulates transcriptional activation by the LEF1/TCF1-CTNNB1 complex and by the complex formed with MITF and CTNNB1. Modulates p53/TP53 levels and p53/TP53-mediated apoptosis. Modulates proteasomal degradation of target proteins by the SCF (SKP2-CUL1-F-box protein) E3 ubiquitin-protein ligase complex. Also exhibits SUMO-specific isopeptidase activity, deconjugating SUMO1 from RANGAP1 and RGS17. The chain is Adenosine 5'-monophosphoramidase HINT1 (HINT1) from Bos taurus (Bovine).